A 153-amino-acid polypeptide reads, in one-letter code: Endoribonuclease YbeY (153 aa).

Residues H114, H118, and H124 each coordinate Zn(2+).

It belongs to the endoribonuclease YbeY family. It depends on Zn(2+) as a cofactor.

The protein localises to the cytoplasm. Its function is as follows. Single strand-specific metallo-endoribonuclease involved in late-stage 70S ribosome quality control and in maturation of the 3' terminus of the 16S rRNA. This chain is Endoribonuclease YbeY, found in Shewanella baltica (strain OS195).